The chain runs to 306 residues: N-acetylmuramic acid 6-phosphate etherase (306 aa).

Residues 59-222 (TSQALAKGGR…STGTMVMLGK (164 aa)) enclose the SIS domain. Residue E87 is the Proton donor of the active site. E118 is an active-site residue.

It belongs to the GCKR-like family. MurNAc-6-P etherase subfamily. Homodimer.

It catalyses the reaction N-acetyl-D-muramate 6-phosphate + H2O = N-acetyl-D-glucosamine 6-phosphate + (R)-lactate. It participates in amino-sugar metabolism; N-acetylmuramate degradation. Its function is as follows. Specifically catalyzes the cleavage of the D-lactyl ether substituent of MurNAc 6-phosphate, producing GlcNAc 6-phosphate and D-lactate. The chain is N-acetylmuramic acid 6-phosphate etherase from Microcystis aeruginosa (strain NIES-843 / IAM M-2473).